Reading from the N-terminus, the 991-residue chain is UPF0182 protein RHA1_ro08670 (991 aa).

The next 7 membrane-spanning stretches (helical) occupy residues 16–36, 61–81, 115–135, 170–190, 214–234, 263–283, and 291–311; these read VMIM…RLVV, LILF…AVVW, FTVG…QASW, LILA…LGTH, VQLA…YWLD, RLIM…AIAV, and MATA…PALI. Residues 902-940 form a disordered region; that stretch reads TGAVATAPGGDATTPPPTGGQPPAPPPPGAPPAPPPATS. Positions 903–914 are enriched in low complexity; sequence GAVATAPGGDAT. Over residues 915 to 938 the composition is skewed to pro residues; it reads TPPPTGGQPPAPPPPGAPPAPPPA.

This sequence belongs to the UPF0182 family.

Its subcellular location is the cell membrane. The sequence is that of UPF0182 protein RHA1_ro08670 from Rhodococcus jostii (strain RHA1).